A 422-amino-acid polypeptide reads, in one-letter code: Osteomodulin (422 aa).

The first 20 residues, 1–20 (MGFSSLVCVLFFFLGVKVYC), serve as a signal peptide directing secretion. Positions 21-27 (QYESYQW) are excised as a propeptide. Sulfotyrosine occurs at positions 22, 25, 31, 39, 51, and 77. Residues 53–91 (APFHQHTLGCASECFCPPNFPSSMYCDNRKLKTIPNIPA) enclose the LRRNT domain. 11 LRR repeats span residues 92-113 (HIQQ…SFIN), 116-129 (HLKE…KIKS), 142-164 (NLLQ…PKSL), 165-184 (ERIF…AVNG), 187-207 (NLTM…QEKV), 213-233 (KLMQ…GLPS), 234-255 (SLMY…YFNK), 258-280 (KLHA…FNLS), 281-294 (NLIE…KLKQ), 301-322 (NLEH…VMCP), and 331-353 (HLTH…IFLC). N-linked (GlcNAc...) asparagine glycosylation is found at Asn113 and Asn121. Asn187 is a glycosylation site (N-linked (GlcNAc...) asparagine). N-linked (GlcNAc...) asparagine glycosylation is found at Asn242 and Asn278. Residue Asn316 is glycosylated (N-linked (GlcNAc...) asparagine). Cys321 and Cys353 form a disulfide bridge. The disordered stretch occupies residues 385 to 422 (DDGDSEDHDDHHEGPEEEGTEENIDAHYYGSQEWQETI). Residues Tyr412 and Tyr413 each carry the sulfotyrosine modification.

It belongs to the small leucine-rich proteoglycan (SLRP) family. SLRP class II subfamily. In terms of assembly, binds the alpha(V)beta(3)-integrin. The N-terminus is blocked. In terms of processing, glycosylated; contains keratan sulfate. Post-translationally, sulfated on tyrosine residue(s). In terms of tissue distribution, bone specific (at protein level).

Its subcellular location is the secreted. The protein localises to the extracellular space. It is found in the extracellular matrix. Its function is as follows. May be implicated in biomineralization processes. Has a function in binding of osteoblasts via the alpha(V)beta(3)-integrin. The chain is Osteomodulin (OMD) from Bos taurus (Bovine).